The sequence spans 516 residues: Flavonoid 3',5'-hydroxylase (516 aa).

Residue C453 coordinates heme.

Belongs to the cytochrome P450 family. Heme serves as cofactor.

It carries out the reaction a 3',5'-unsubstituted flavanone + 2 reduced [NADPH--hemoprotein reductase] + 2 O2 = a 3',5'-dihydroxyflavanone + 2 oxidized [NADPH--hemoprotein reductase] + 2 H2O + 2 H(+). The protein operates within pigment biosynthesis; anthocyanin biosynthesis. Its function is as follows. Catalyzes the 3'5'-hydroxylation of naringenin and eriodictyol to form 5,7,3,'4',5'-pentahydroxyflavanone and 3',5'-hydroxylation of dihydrokaempferol and dihydroquercetin to form dihydromyricetin. This is Flavonoid 3',5'-hydroxylase (CYP75A4) from Gentiana triflora (Clustered gentian).